We begin with the raw amino-acid sequence, 164 residues long: MELTDKASFRDAMAHVGAAVNIITTDGPAGRAGFTASAVCSVTDTPPTLLVCLNRSASVWPVFSEHHTLCVNTLAAGQEALSTLFGGKTAMDERFAAADWQTGATGCPRLEAALVSFDCRIDQRVSVGTHDILFCHVVAITRHPEPRGLMWFDRGYHTLMRPAC.

It belongs to the non-flavoprotein flavin reductase family. RutF subfamily.

It carries out the reaction FMNH2 + NAD(+) = FMN + NADH + 2 H(+). Its function is as follows. Catalyzes the reduction of FMN to FMNH2 which is used to reduce pyrimidine by RutA via the Rut pathway. In Klebsiella pneumoniae subsp. pneumoniae (strain ATCC 700721 / MGH 78578), this protein is FMN reductase (NADH) RutF.